We begin with the raw amino-acid sequence, 331 residues long: MKEEECSPLLSQDTAGREHPLTRNSPPTANIPCPAPWENQKGSWGCRCCPGAKRQASGEGQASSLPLSTGSNCVKYLIFLSNFLFSLPSLLALAAGLWGLTVKRSQGIGWGGPVPTDPMLMLVLGGLVVSVVSLSGCLGAFCENSCLLHWYCGAVLFCLALEALAGVLMVTLWKPLQDSLKYTLHAAIIHYWDDPDLHFLLDQVQLGLQCCGAVSYQDWQQNLYFNCSSPGVQACSLPASCCINPQEDGAVVNTQCGFGALGLDQNVAGQVVFLQGCWPALQEWLRGNTGAIGDCAVAVVMIQGTELLLAACLLRALAVHEAAEDIEAGPL.

The segment at 1–34 is disordered; that stretch reads MKEEECSPLLSQDTAGREHPLTRNSPPTANIPCP. Residues 1 to 76 lie on the Cytoplasmic side of the membrane; sequence MKEEECSPLL…LSTGSNCVKY (76 aa). A helical membrane pass occupies residues 77–97; it reads LIFLSNFLFSLPSLLALAAGL. Topologically, residues 98-120 are extracellular; that stretch reads WGLTVKRSQGIGWGGPVPTDPML. The helical transmembrane segment at 121–141 threads the bilayer; the sequence is MLVLGGLVVSVVSLSGCLGAF. The Cytoplasmic portion of the chain corresponds to 142 to 152; it reads CENSCLLHWYC. The chain crosses the membrane as a helical span at residues 153 to 173; that stretch reads GAVLFCLALEALAGVLMVTLW. Over 174–331 the chain is Extracellular; sequence KPLQDSLKYT…AAEDIEAGPL (158 aa). Intrachain disulfides connect Cys-210/Cys-277, Cys-211/Cys-241, Cys-227/Cys-235, and Cys-242/Cys-256. Asn-226 is a glycosylation site (N-linked (GlcNAc...) asparagine).

The protein belongs to the tetraspanin (TM4SF) family. As to quaternary structure, interacts with ADAM10.

It is found in the cell membrane. In terms of biological role, part of TspanC8 subgroup, composed of 6 members that interact with the transmembrane metalloprotease ADAM10. This interaction is required for ADAM10 exit from the endoplasmic reticulum and for enzymatic maturation and trafficking to the cell surface as well as substrate specificity. Different TspanC8/ADAM10 complexes have distinct substrates. The sequence is that of Tetraspanin-10 (Tspan10) from Mus musculus (Mouse).